Reading from the N-terminus, the 319-residue chain is ATP-dependent 6-phosphofructokinase (319 aa).

Residue Gly11 participates in ATP binding. Residue 21–25 (RAAVR) coordinates ADP. ATP contacts are provided by residues 72–73 (RS) and 102–105 (GDGS). Asp103 lines the Mg(2+) pocket. 125-127 (TID) contributes to the substrate binding site. Asp127 (proton acceptor) is an active-site residue. Residue Arg154 participates in ADP binding. Residues Arg162 and 169 to 171 (MGR) contribute to the substrate site. ADP is bound by residues 185–187 (GAE), Arg211, and 213–215 (KKH). Residues Glu222, Arg243, and 249 to 252 (HIQR) each bind substrate.

Belongs to the phosphofructokinase type A (PFKA) family. ATP-dependent PFK group I subfamily. Prokaryotic clade 'B1' sub-subfamily. Homotetramer. Mg(2+) is required as a cofactor.

It localises to the cytoplasm. The enzyme catalyses beta-D-fructose 6-phosphate + ATP = beta-D-fructose 1,6-bisphosphate + ADP + H(+). Its pathway is carbohydrate degradation; glycolysis; D-glyceraldehyde 3-phosphate and glycerone phosphate from D-glucose: step 3/4. Allosterically activated by ADP and other diphosphonucleosides, and allosterically inhibited by phosphoenolpyruvate. In terms of biological role, catalyzes the phosphorylation of D-fructose 6-phosphate to fructose 1,6-bisphosphate by ATP, the first committing step of glycolysis. This Brevibacillus brevis (strain 47 / JCM 6285 / NBRC 100599) protein is ATP-dependent 6-phosphofructokinase.